Consider the following 756-residue polypeptide: 5-methyltetrahydropteroyltriglutamate--homocysteine methyltransferase (756 aa).

5-methyltetrahydropteroyltri-L-glutamate contacts are provided by residues 16 to 19 and Lys116; that span reads RELK. L-homocysteine-binding positions include 435-437 and Glu488; that span reads IGS. L-methionine contacts are provided by residues 435 to 437 and Glu488; that span reads IGS. Residues 519 to 520 and Trp565 each bind 5-methyltetrahydropteroyltri-L-glutamate; that span reads RC. Asp603 is an L-homocysteine binding site. Asp603 contacts L-methionine. Glu609 contributes to the 5-methyltetrahydropteroyltri-L-glutamate binding site. Zn(2+) contacts are provided by His645, Cys647, and Glu669. His698 serves as the catalytic Proton donor. Cys730 lines the Zn(2+) pocket.

Belongs to the vitamin-B12 independent methionine synthase family. Requires Zn(2+) as cofactor.

It catalyses the reaction 5-methyltetrahydropteroyltri-L-glutamate + L-homocysteine = tetrahydropteroyltri-L-glutamate + L-methionine. Its pathway is amino-acid biosynthesis; L-methionine biosynthesis via de novo pathway; L-methionine from L-homocysteine (MetE route): step 1/1. Its function is as follows. Catalyzes the transfer of a methyl group from 5-methyltetrahydrofolate to homocysteine resulting in methionine formation. The protein is 5-methyltetrahydropteroyltriglutamate--homocysteine methyltransferase of Marinobacter nauticus (strain ATCC 700491 / DSM 11845 / VT8) (Marinobacter aquaeolei).